A 741-amino-acid polypeptide reads, in one-letter code: Catalase-peroxidase (741 aa).

The N-terminal stretch at 1 to 23 (MLKKIITALGMSGMLLASSNAIA) is a signal peptide. The segment at residues 102–223 (WHDAGTYRIY…YAATQMGLIY (122 aa)) is a cross-link (tryptophyl-tyrosyl-methioninium (Trp-Tyr) (with M-249)). Histidine 103 functions as the Proton acceptor in the catalytic mechanism. The tryptophyl-tyrosyl-methioninium (Tyr-Met) (with W-102) cross-link spans 223 to 249 (YVNPEGPDGKPDIKGAASEIRQAFRAM). Histidine 264 is a binding site for heme b.

Belongs to the peroxidase family. Peroxidase/catalase subfamily. In terms of assembly, homodimer or homotetramer. Requires heme b as cofactor. Post-translationally, formation of the three residue Trp-Tyr-Met cross-link is important for the catalase, but not the peroxidase activity of the enzyme.

It catalyses the reaction H2O2 + AH2 = A + 2 H2O. The catalysed reaction is 2 H2O2 = O2 + 2 H2O. Bifunctional enzyme with both catalase and broad-spectrum peroxidase activity. The chain is Catalase-peroxidase from Francisella tularensis subsp. holarctica (strain FTNF002-00 / FTA).